The following is a 358-amino-acid chain: Methionine import ATP-binding protein MetN (358 aa).

The ABC transporter domain occupies 2–247 (ITTTGLTKVY…PGSELAHELF (246 aa)). 38-45 (GQSGAGKS) serves as a coordination point for ATP.

It belongs to the ABC transporter superfamily. Methionine importer (TC 3.A.1.24) family. The complex is composed of two ATP-binding proteins (MetN), two transmembrane proteins (MetI) and a solute-binding protein (MetQ).

The protein localises to the cell membrane. The catalysed reaction is L-methionine(out) + ATP + H2O = L-methionine(in) + ADP + phosphate + H(+). It catalyses the reaction D-methionine(out) + ATP + H2O = D-methionine(in) + ADP + phosphate + H(+). Functionally, part of the ABC transporter complex MetNIQ involved in methionine import. Responsible for energy coupling to the transport system. The sequence is that of Methionine import ATP-binding protein MetN from Streptomyces griseus.